The sequence spans 97 residues: Sec-independent protein translocase protein TatA (97 aa).

A helical membrane pass occupies residues 1–21 (MGFNIWSLLIILLIVALLFGT). The segment at 28–97 (GGDLGGAIRG…SAEHHDRSTS (70 aa)) is disordered. Positions 37 to 56 (GFKESMREGEEEEAQKRADG) are enriched in basic and acidic residues. Low complexity predominate over residues 78 to 87 (QARESSSARQ). The span at 88–97 (SAEHHDRSTS) shows a compositional bias: basic and acidic residues.

The protein belongs to the TatA/E family. The Tat system comprises two distinct complexes: a TatABC complex, containing multiple copies of TatA, TatB and TatC subunits, and a separate TatA complex, containing only TatA subunits. Substrates initially bind to the TatABC complex, which probably triggers association of the separate TatA complex to form the active translocon.

Its subcellular location is the cell inner membrane. Its function is as follows. Part of the twin-arginine translocation (Tat) system that transports large folded proteins containing a characteristic twin-arginine motif in their signal peptide across membranes. TatA could form the protein-conducting channel of the Tat system. This Halorhodospira halophila (strain DSM 244 / SL1) (Ectothiorhodospira halophila (strain DSM 244 / SL1)) protein is Sec-independent protein translocase protein TatA.